Reading from the N-terminus, the 887-residue chain is Valine--tRNA ligase (887 aa).

The short motif at 47 to 57 (PNVTGALHMGH) is the 'HIGH' region element. Positions 527 to 531 (KMSKS) match the 'KMSKS' region motif. An ATP-binding site is contributed by lysine 530. Residues 817-885 (LVNVEEEEKR…LLASLEKIRK (69 aa)) are a coiled coil.

This sequence belongs to the class-I aminoacyl-tRNA synthetase family. ValS type 1 subfamily. In terms of assembly, monomer.

It localises to the cytoplasm. It catalyses the reaction tRNA(Val) + L-valine + ATP = L-valyl-tRNA(Val) + AMP + diphosphate. In terms of biological role, catalyzes the attachment of valine to tRNA(Val). As ValRS can inadvertently accommodate and process structurally similar amino acids such as threonine, to avoid such errors, it has a 'posttransfer' editing activity that hydrolyzes mischarged Thr-tRNA(Val) in a tRNA-dependent manner. This chain is Valine--tRNA ligase, found in Geobacter sulfurreducens (strain ATCC 51573 / DSM 12127 / PCA).